A 39-amino-acid polypeptide reads, in one-letter code: Photosystem II reaction center protein L (39 aa).

A helical membrane pass occupies residues 18–38; it reads SLYLGLLFVFVTGVLMSSYFF.

It belongs to the PsbL family. As to quaternary structure, PSII is composed of 1 copy each of membrane proteins PsbA, PsbB, PsbC, PsbD, PsbE, PsbF, PsbH, PsbI, PsbJ, PsbK, PsbL, PsbM, PsbT, PsbX, PsbY, PsbZ, Psb30/Ycf12, peripheral proteins PsbO, CyanoQ (PsbQ), PsbU, PsbV and a large number of cofactors. It forms dimeric complexes.

The protein localises to the cellular thylakoid membrane. In terms of biological role, one of the components of the core complex of photosystem II (PSII). PSII is a light-driven water:plastoquinone oxidoreductase that uses light energy to abstract electrons from H(2)O, generating O(2) and a proton gradient subsequently used for ATP formation. It consists of a core antenna complex that captures photons, and an electron transfer chain that converts photonic excitation into a charge separation. This subunit is found at the monomer-monomer interface and is required for correct PSII assembly and/or dimerization. In Synechococcus sp. (strain CC9605), this protein is Photosystem II reaction center protein L.